The primary structure comprises 349 residues: Oxygen-dependent coproporphyrinogen-III oxidase (349 aa).

Disordered stretches follow at residues 1-21 (MGASENLGQGPPPPHSRKRAR) and 37-60 (SLDGGQSFRTDSWERPEGGGGRSK). Ser-105 contacts substrate. Residues His-109 and His-119 each coordinate a divalent metal cation. His-119 (proton donor) is an active-site residue. 121 to 123 (NYR) provides a ligand contact to substrate. Residues His-153 and His-183 each coordinate a divalent metal cation. The tract at residues 273 to 308 (YAEFNLVWDRGTIFGLQTNGRTESILMSLPPLARWE) is important for dimerization.

It belongs to the aerobic coproporphyrinogen-III oxidase family. As to quaternary structure, homodimer. Requires a divalent metal cation as cofactor.

It is found in the cytoplasm. The catalysed reaction is coproporphyrinogen III + O2 + 2 H(+) = protoporphyrinogen IX + 2 CO2 + 2 H2O. Its pathway is porphyrin-containing compound metabolism; protoporphyrin-IX biosynthesis; protoporphyrinogen-IX from coproporphyrinogen-III (O2 route): step 1/1. Its function is as follows. Involved in the heme and chlorophyll biosynthesis. Catalyzes the aerobic oxidative decarboxylation of propionate groups of rings A and B of coproporphyrinogen-III to yield the vinyl groups in protoporphyrinogen-IX. The sequence is that of Oxygen-dependent coproporphyrinogen-III oxidase from Prochlorococcus marinus (strain MIT 9313).